Consider the following 264-residue polypeptide: Phosphoribosylaminoimidazole-succinocarboxamide synthase (264 aa).

The protein belongs to the SAICAR synthetase family.

The catalysed reaction is 5-amino-1-(5-phospho-D-ribosyl)imidazole-4-carboxylate + L-aspartate + ATP = (2S)-2-[5-amino-1-(5-phospho-beta-D-ribosyl)imidazole-4-carboxamido]succinate + ADP + phosphate + 2 H(+). The protein operates within purine metabolism; IMP biosynthesis via de novo pathway; 5-amino-1-(5-phospho-D-ribosyl)imidazole-4-carboxamide from 5-amino-1-(5-phospho-D-ribosyl)imidazole-4-carboxylate: step 1/2. The protein is Phosphoribosylaminoimidazole-succinocarboxamide synthase (purC) of Synechocystis sp. (strain ATCC 27184 / PCC 6803 / Kazusa).